Reading from the N-terminus, the 742-residue chain is CD44 antigen (742 aa).

Positions 1–20 are cleaved as a signal peptide; it reads MDKFWWHAAWGLCLVPLSLA. The Extracellular portion of the chain corresponds to 21–649; the sequence is QIDLNITCRF…GPIRTPQIPE (629 aa). An N-linked (GlcNAc...) asparagine glycan is attached at Asn-25. 3 disulfides stabilise this stretch: Cys-28–Cys-129, Cys-53–Cys-118, and Cys-77–Cys-97. The Link domain maps to 32 to 120; sequence GVFHVEKNGR…TSQYDTYCFN (89 aa). Arg-41 is a binding site for hyaluronan. The N-linked (GlcNAc...) asparagine glycan is linked to Asn-57. Arg-78 and Tyr-79 together coordinate hyaluronan. N-linked (GlcNAc...) asparagine glycosylation occurs at Asn-100. Position 105 (Tyr-105) interacts with hyaluronan. Residues Asn-110 and Asn-120 are each glycosylated (N-linked (GlcNAc...) asparagine). Disordered stretches follow at residues 160–189 and 261–285; these read EYRTNPEDIYPSNPTDDDVSSGSSSERSST and TTQMAGTSSNTISAGWEPNEENEDE. Positions 179-189 are enriched in low complexity; that stretch reads SSGSSSERSST. The O-linked (Xyl...) (chondroitin sulfate) serine glycan is linked to Ser-180. A stem region spans residues 224-649; it reads LMSTSATATE…GPIRTPQIPE (426 aa). Residues 261–273 show a composition bias toward polar residues; it reads TTQMAGTSSNTIS. The N-linked (GlcNAc...) asparagine glycan is linked to Asn-350. 2 disordered regions span residues 372-558 and 590-642; these read HHEE…TLLE and TVGD…SGPI. Residues 386 to 396 are compositionally biased toward low complexity; sequence QATPSSTTEET. Over residues 407–421 the composition is skewed to basic and acidic residues; it reads RWHEGYRQTPKEDSH. Positions 422 to 435 are enriched in low complexity; the sequence is STTGTAAASAHTSH. Composition is skewed to polar residues over residues 439–452 and 476–489; these read GRTTPSPEDSSWTD and SHSITLQPTANPNT. Residues 502 to 516 are compositionally biased toward low complexity; sequence SMTTQQSNSQSFSTS. A compositionally biased stretch (polar residues) spans 528–539; sequence TTSTLTSSNRND. N-linked (GlcNAc...) asparagine glycans are attached at residues Asn-548 and Asn-599. The segment covering 592 to 606 has biased composition (polar residues); it reads GDSNSNVNRSLSGDQ. Basic and acidic residues predominate over residues 619-629; sequence HGSESDGHSHG. The N-linked (GlcNAc...) asparagine glycan is linked to Asn-636. A helical membrane pass occupies residues 650–670; it reads WLIILASLLALALILAVCIAV. Topologically, residues 671 to 742 are cytoplasmic; sequence NSRRRCGQKK…LQNVDMKIGV (72 aa). Ser-672 is subject to Phosphoserine; by PKC. Residues 673 to 691 are required for interaction with EZR, MSN and RDX and for co-localization to microvilli; sequence RRRCGQKKKLVINSGNGAV. 3 positions are modified to phosphoserine: Ser-686, Ser-697, and Ser-706.

As to quaternary structure, interacts with PKN2. Interacts with TIAM1 and TIAM2. Interacts with HA, as well as other glycosaminoglycans, collagen, laminin, and fibronectin via its N-terminal segment. Interacts with UNC119. Interacts with PDPN (via extracellular domain); this interaction is required for PDPN-mediated directional migration and regulation of lamellipodia extension/stabilization during cell spreading and migration. Interacts with RDX, EZR and MSN. Interacts with EGFR. Interacts with CD74; this complex is essential for the MIF-induced signaling cascade that results in B cell survival. Proteolytically cleaved in the extracellular matrix by specific proteinases (possibly MMPs) in several cell lines and tumors. In terms of processing, N-glycosylated. Post-translationally, O-glycosylated; contains chondroitin sulfate glycans which can be more or less sulfated and whose number may affect the accessibility of specific proteinases to their cleavage site(s). It is uncertain if O-glycosylation occurs on Thr-637 or Thr-638. Phosphorylated; activation of PKC results in the dephosphorylation of Ser-706 (constitutive phosphorylation site), and the phosphorylation of Ser-672. In terms of tissue distribution, detected in fibroblasts and urine (at protein level). Detected in placenta (at protein level). Isoform 10 (epithelial isoform) is expressed by cells of epithelium and highly expressed by carcinomas. Expression is repressed in neuroblastoma cells.

It is found in the cell membrane. It localises to the cell projection. The protein localises to the microvillus. The protein resides in the secreted. Cell-surface receptor that plays a role in cell-cell interactions, cell adhesion and migration, helping them to sense and respond to changes in the tissue microenvironment. Participates thereby in a wide variety of cellular functions including the activation, recirculation and homing of T-lymphocytes, hematopoiesis, inflammation and response to bacterial infection. Engages, through its ectodomain, extracellular matrix components such as hyaluronan/HA, collagen, growth factors, cytokines or proteases and serves as a platform for signal transduction by assembling, via its cytoplasmic domain, protein complexes containing receptor kinases and membrane proteases. Such effectors include PKN2, the RhoGTPases RAC1 and RHOA, Rho-kinases and phospholipase C that coordinate signaling pathways promoting calcium mobilization and actin-mediated cytoskeleton reorganization essential for cell migration and adhesion. The sequence is that of CD44 antigen (CD44) from Homo sapiens (Human).